The primary structure comprises 338 residues: MTDRYILAVESSCDETSVAILKNDNVLLTNIIASQVESHKRFGGVVPEVASRHHVEVITTCFDDALKEAQLEASDLTAVAVTYGPGLVGALLVGLAAAKAFAWANDLPLIPVNHMAGHLMAAREQGELEYPLMALLVSGGHTELVYVTEPGEYHIVGETRDDAVGEAYDKVGRVMGLPYPAGREIDQLAHQGTDTYHFPRAMMKEDHLEFSFSGLKSAFINLHHNAQQKGEELVLEDLCASFQAAVLDILLAKTKKALKQYPSKMLVVAGGVAANQGLRERLAEEITDIAVVIPPLRLCGDNAGMIALAAVVEYEKGHVAGLDLNAKPSLAFDSFHQQ.

Positions 114 and 118 each coordinate Fe cation. Residues 136 to 140 (LVSGG), D169, G182, D186, and N275 each bind substrate. D301 provides a ligand contact to Fe cation.

The protein belongs to the KAE1 / TsaD family. The cofactor is Fe(2+).

Its subcellular location is the cytoplasm. It catalyses the reaction L-threonylcarbamoyladenylate + adenosine(37) in tRNA = N(6)-L-threonylcarbamoyladenosine(37) in tRNA + AMP + H(+). In terms of biological role, required for the formation of a threonylcarbamoyl group on adenosine at position 37 (t(6)A37) in tRNAs that read codons beginning with adenine. Is involved in the transfer of the threonylcarbamoyl moiety of threonylcarbamoyl-AMP (TC-AMP) to the N6 group of A37, together with TsaE and TsaB. TsaD likely plays a direct catalytic role in this reaction. This Streptococcus equi subsp. equi (strain 4047) protein is tRNA N6-adenosine threonylcarbamoyltransferase.